The primary structure comprises 86 residues: Acyl-CoA-binding protein homolog 1 (86 aa).

The ACB domain maps to 1-86 (MTLSFDDAAA…VEELIAKYGA (86 aa)). Residues lysine 13, 28-32 (YALFK), lysine 50, lysine 54, and tyrosine 73 contribute to the an acyl-CoA site.

The protein belongs to the ACBP family.

Functionally, binds medium- and long-chain acyl-CoA esters with very high affinity and may function as an intracellular carrier of acyl-CoA esters. The polypeptide is Acyl-CoA-binding protein homolog 1 (acbp-1) (Caenorhabditis elegans).